Here is a 305-residue protein sequence, read N- to C-terminus: tRNA uridine(34) hydroxylase (305 aa).

Positions Ala-125–Ser-219 constitute a Rhodanese domain. Cys-179 (cysteine persulfide intermediate) is an active-site residue.

The protein belongs to the TrhO family.

The enzyme catalyses uridine(34) in tRNA + AH2 + O2 = 5-hydroxyuridine(34) in tRNA + A + H2O. Its function is as follows. Catalyzes oxygen-dependent 5-hydroxyuridine (ho5U) modification at position 34 in tRNAs. This chain is tRNA uridine(34) hydroxylase, found in Brucella anthropi (strain ATCC 49188 / DSM 6882 / CCUG 24695 / JCM 21032 / LMG 3331 / NBRC 15819 / NCTC 12168 / Alc 37) (Ochrobactrum anthropi).